A 196-amino-acid chain; its full sequence is ATP-dependent Clp protease proteolytic subunit (196 aa).

Catalysis depends on Ser96, which acts as the Nucleophile. His121 is an active-site residue.

The protein belongs to the peptidase S14 family. In terms of assembly, fourteen ClpP subunits assemble into 2 heptameric rings which stack back to back to give a disk-like structure with a central cavity, resembling the structure of eukaryotic proteasomes.

It localises to the cytoplasm. The catalysed reaction is Hydrolysis of proteins to small peptides in the presence of ATP and magnesium. alpha-casein is the usual test substrate. In the absence of ATP, only oligopeptides shorter than five residues are hydrolyzed (such as succinyl-Leu-Tyr-|-NHMec, and Leu-Tyr-Leu-|-Tyr-Trp, in which cleavage of the -Tyr-|-Leu- and -Tyr-|-Trp bonds also occurs).. Functionally, cleaves peptides in various proteins in a process that requires ATP hydrolysis. Has a chymotrypsin-like activity. Plays a major role in the degradation of misfolded proteins. This is ATP-dependent Clp protease proteolytic subunit from Streptococcus mutans serotype c (strain ATCC 700610 / UA159).